The following is a 429-amino-acid chain: Adenylosuccinate synthetase (429 aa).

GTP contacts are provided by residues 15–21 (GDEGKGK) and 43–45 (GHV). Asp-16 functions as the Proton acceptor in the catalytic mechanism. Positions 16 and 43 each coordinate Mg(2+). IMP contacts are provided by residues 16–19 (DEGK), 41–44 (NAGH), Thr-131, Arg-145, Gln-225, Thr-240, and Arg-304. His-44 acts as the Proton donor in catalysis. Position 300 to 306 (300 to 306 (SNTKRPR)) interacts with substrate. Residues Arg-306, 332–334 (LLD), and 414–416 (SVG) contribute to the GTP site.

This sequence belongs to the adenylosuccinate synthetase family. In terms of assembly, homodimer. Requires Mg(2+) as cofactor.

Its subcellular location is the cytoplasm. The catalysed reaction is IMP + L-aspartate + GTP = N(6)-(1,2-dicarboxyethyl)-AMP + GDP + phosphate + 2 H(+). Its pathway is purine metabolism; AMP biosynthesis via de novo pathway; AMP from IMP: step 1/2. Its function is as follows. Plays an important role in the de novo pathway of purine nucleotide biosynthesis. Catalyzes the first committed step in the biosynthesis of AMP from IMP. In Mesoplasma florum (strain ATCC 33453 / NBRC 100688 / NCTC 11704 / L1) (Acholeplasma florum), this protein is Adenylosuccinate synthetase.